A 427-amino-acid chain; its full sequence is Glucose-6-phosphate isomerase (427 aa).

Residue E281 is the Proton donor of the active site. Active-site residues include H302 and K417.

This sequence belongs to the GPI family.

The protein localises to the cytoplasm. The catalysed reaction is alpha-D-glucose 6-phosphate = beta-D-fructose 6-phosphate. The protein operates within carbohydrate biosynthesis; gluconeogenesis. It functions in the pathway carbohydrate degradation; glycolysis; D-glyceraldehyde 3-phosphate and glycerone phosphate from D-glucose: step 2/4. Its function is as follows. Catalyzes the reversible isomerization of glucose-6-phosphate to fructose-6-phosphate. This Mycoplasmopsis pulmonis (strain UAB CTIP) (Mycoplasma pulmonis) protein is Glucose-6-phosphate isomerase.